We begin with the raw amino-acid sequence, 219 residues long: Adenylate kinase (219 aa).

Position 10 to 15 (10 to 15 (GAGKGT)) interacts with ATP. Residues 30–59 (ATGDLFRANISQGTDLGKQARAYMDAGQLV) are NMP. Residues threonine 31, arginine 36, 57 to 59 (QLV), 85 to 88 (GFPR), and glutamine 92 each bind AMP. Residues 126–164 (GRRVCRNNSAHVFHLTYNPPKAEGVCDACGGELYQRDDD) form an LID region. ATP contacts are provided by residues arginine 127 and 137-138 (VF). Arginine 161 and arginine 172 together coordinate AMP. Residue glycine 200 coordinates ATP.

It belongs to the adenylate kinase family. Monomer.

It is found in the cytoplasm. It carries out the reaction AMP + ATP = 2 ADP. Its pathway is purine metabolism; AMP biosynthesis via salvage pathway; AMP from ADP: step 1/1. Catalyzes the reversible transfer of the terminal phosphate group between ATP and AMP. Plays an important role in cellular energy homeostasis and in adenine nucleotide metabolism. This is Adenylate kinase from Streptomyces griseus subsp. griseus (strain JCM 4626 / CBS 651.72 / NBRC 13350 / KCC S-0626 / ISP 5235).